We begin with the raw amino-acid sequence, 284 residues long: 4-diphosphocytidyl-2-C-methyl-D-erythritol kinase (284 aa).

The active site involves Lys-22. An ATP-binding site is contributed by 104 to 114; sequence PVGAGLGGASS. Asp-146 is a catalytic residue.

It belongs to the GHMP kinase family. IspE subfamily.

The catalysed reaction is 4-CDP-2-C-methyl-D-erythritol + ATP = 4-CDP-2-C-methyl-D-erythritol 2-phosphate + ADP + H(+). The protein operates within isoprenoid biosynthesis; isopentenyl diphosphate biosynthesis via DXP pathway; isopentenyl diphosphate from 1-deoxy-D-xylulose 5-phosphate: step 3/6. Catalyzes the phosphorylation of the position 2 hydroxy group of 4-diphosphocytidyl-2C-methyl-D-erythritol. The sequence is that of 4-diphosphocytidyl-2-C-methyl-D-erythritol kinase from Hydrogenobaculum sp. (strain Y04AAS1).